A 64-amino-acid polypeptide reads, in one-letter code: Translation machinery-associated protein 7 homolog (64 aa).

The interval M1–K64 is disordered. Residues D21–R50 are a coiled coil. The span at E28–A44 shows a compositional bias: basic and acidic residues. Over residues L53 to K64 the composition is skewed to gly residues.

Belongs to the TMA7 family.

The chain is Translation machinery-associated protein 7 homolog from Caenorhabditis elegans.